Reading from the N-terminus, the 143-residue chain is Large ribosomal subunit protein uL16c (143 aa).

This sequence belongs to the universal ribosomal protein uL16 family. As to quaternary structure, part of the 50S ribosomal subunit.

The protein resides in the plastid. It localises to the chloroplast. This Cyanidioschyzon merolae (strain NIES-3377 / 10D) (Unicellular red alga) protein is Large ribosomal subunit protein uL16c.